We begin with the raw amino-acid sequence, 710 residues long: Protein CNGC15a (710 aa).

A run of 6 helical transmembrane segments spans residues 85-105, 115-135, 174-194, 207-226, 248-268, and 368-388; these read IFLA…YLPV, SIGL…FYII, LWSD…AVIP, VVRL…IYPL, YLTL…LLSI, and AEIN…ALLI. Position 474 to 559 (474 to 559) interacts with a nucleoside 3',5'-cyclic phosphate; it reads LFDQMDDRML…WALDPRPTAV (86 aa).

This sequence belongs to the cyclic nucleotide-gated cation channel (TC 1.A.1.5) family. As to quaternary structure, interacts (via N-terminus) with DMI1 (via c-terminus). The Nod factor has no effect on this interaction, implying that the complex is maintained after activation. As to expression, expressed in roots, stems, leaves, flowers and pods.

The protein resides in the nucleus membrane. Functionally, cyclic nucleotide-gated channel involved in the establishment of both rhizobial and mycorrhizal associations. Required for full activation of nuclear-localized Ca(2+) oscillations by Nod and Myc factors. Simultaneous activation of the K(+)-permeable channel DMI1 and the Ca(2+) channel CNGC15 can give rise to sustained Ca(2+) oscillations. May function during fertilization in both female and male gametophytic Ca(2+) signaling. The polypeptide is Protein CNGC15a (Medicago truncatula (Barrel medic)).